Reading from the N-terminus, the 580-residue chain is Protein O-linked-mannose beta-1,4-N-acetylglucosaminyltransferase 2 (580 aa).

At 1–4 (MHLS) the chain is on the cytoplasmic side. A helical; Signal-anchor for type II membrane protein transmembrane segment spans residues 5–25 (AVFNALLVSVLAAVLWKHVRL). The Lumenal portion of the chain corresponds to 26–580 (REHAATLEEE…PFADVLVCNT (555 aa)). N-linked (GlcNAc...) asparagine glycans are attached at residues Asn99 and Asn276. Positions 488–580 (ARCQASVHGA…PFADVLVCNT (93 aa)) constitute a Fibronectin type-III domain.

The protein belongs to the glycosyltransferase 61 family.

It localises to the endoplasmic reticulum membrane. The enzyme catalyses 3-O-(alpha-D-mannosyl)-L-threonyl-[protein] + UDP-N-acetyl-alpha-D-glucosamine = 3-O-(N-acetyl-beta-D-glucosaminyl-(1-&gt;4)-alpha-D-mannosyl)-L-threonyl-[protein] + UDP + H(+). Its pathway is protein modification; protein glycosylation. Its function is as follows. O-linked mannose beta-1,4-N-acetylglucosaminyltransferase that transfers UDP-N-acetyl-D-glucosamine to the 4-position of the mannose to generate N-acetyl-D-glucosamine-beta-1,4-O-D-mannosylprotein. Involved in the biosynthesis of the phosphorylated O-mannosyl trisaccharide (N-acetylgalactosamine-beta-3-N-acetylglucosamine-beta-4-(phosphate-6-)mannose), a carbohydrate structure present in alpha-dystroglycan (DAG1), which is required for binding laminin G-like domain-containing extracellular proteins with high affinity. The sequence is that of Protein O-linked-mannose beta-1,4-N-acetylglucosaminyltransferase 2 (POMGNT2) from Pan troglodytes (Chimpanzee).